The primary structure comprises 344 residues: L-rhamnose-proton symporter (344 aa).

A run of 10 helical transmembrane segments spans residues 4 to 24, 38 to 58, 68 to 88, 101 to 121, 137 to 157, 175 to 195, 214 to 234, 259 to 279, 290 to 310, and 323 to 343; these read AITM…CFYA, WSVG…ALLL, FSLS…IGNI, MGIG…TPII, TLLG…AGQL, LVLA…MNAA, LPSY…FCFI, VLLS…YAWG, ISWM…GLVL, and VLSL…IGMA.

This sequence belongs to the L-rhamnose transporter (TC 2.A.7.6) family.

Its subcellular location is the cell inner membrane. It carries out the reaction L-rhamnopyranose(in) + H(+)(in) = L-rhamnopyranose(out) + H(+)(out). Its function is as follows. Uptake of L-rhamnose across the cytoplasmic membrane with the concomitant transport of protons into the cell (symport system). The sequence is that of L-rhamnose-proton symporter from Escherichia coli (strain 55989 / EAEC).